The sequence spans 360 residues: Decorin (360 aa).

An N-terminal signal peptide occupies residues 1-16 (MKATIIFLLLAQVSWA). Residues 17–30 (GPFQQRGLFDFMLE) constitute a propeptide that is removed on maturation. Ser34 carries an O-linked (Xyl...) (glycosaminoglycan) serine glycan. 2 cysteine pairs are disulfide-bonded: Cys55-Cys61 and Cys59-Cys68. LRR repeat units follow at residues 74–94 (DKVP…NNKI), 95–118 (TEIK…NNKI), 119–142 (SKIS…KNHL), 143–163 (KELP…ENEI), 164–187 (TKVR…TNPL), 188–213 (KSSG…DTNI), 214–234 (TTIP…GNKI), 235–258 (TKVD…FNSI), 259–282 (SAVD…NNKL), 283–305 (IKVP…NNNI), 306–335 (SAVG…SNPV), and 336–360 (QYWE…GNYK). A glycan (N-linked (GlcNAc...) asparagine) is linked at Asn212. Asn263 and Asn304 each carry an N-linked (GlcNAc...) asparagine glycan. A disulfide bond links Cys314 and Cys347.

It belongs to the small leucine-rich proteoglycan (SLRP) family. SLRP class I subfamily. In terms of assembly, binds to type I and type II collagen, fibronectin and TGF-beta. Forms a ternary complex with MFAP2 and ELN. Interacts with DPT. In terms of processing, the attached glycosaminoglycan chain can be either chondroitin sulfate or dermatan sulfate depending upon the tissue of origin.

The protein resides in the secreted. The protein localises to the extracellular space. Its subcellular location is the extracellular matrix. Its function is as follows. May affect the rate of fibrils formation. The sequence is that of Decorin (DCN) from Equus caballus (Horse).